The chain runs to 341 residues: MATIKDVAKRAGVSTTTVSHVINKTRFVADETREAVWVAIKELHYSPSAVARSLKVNHTKTIGLLATSSEAPYFAEIIEAVENSCFAKGYTLILGNAHNNIEKQQAYLSMMAQKRVDGLLVMCSEYPDALISMLEDHRNIPMVVMDWGKSRGDFTDTVLDNAFEGGYLAGRYLIERGHRDIAAIPGQLERNTGGGRHAGFLKALTEAGIVLREEWLVQGDFEPESGYRAMQQILAQKQRPTAVFCGGDIMAMGAICAADEMGLRVPQDISVIGYDNVRNARYFTPALTTVHQPKERLGETAFNMLLDRITSKREESQTIEVYPTLIERRSVADGPYRDYRR.

In terms of domain architecture, HTH lacI-type spans 2 to 56 (ATIKDVAKRAGVSTTTVSHVINKTRFVADETREAVWVAIKELHYSPSAVARSLKV). Residues 4–23 (IKDVAKRAGVSTTTVSHVIN) constitute a DNA-binding region (H-T-H motif). The DNA-binding element occupies 48–56 (SAVARSLKV). Tyr73, Arg190, Thr192, Phe221, and Asp275 together coordinate hypoxanthine.

As to quaternary structure, homodimer.

It participates in purine metabolism; purine nucleotide biosynthesis [regulation]. Is the main repressor of the genes involved in the de novo synthesis of purine nucleotides, regulating purB, purC, purEK, purF, purHD, purL, purMN and guaBA expression. PurR is allosterically activated to bind its cognate DNA by binding the purine corepressors, hypoxanthine or guanine, thereby effecting transcription repression. The sequence is that of HTH-type transcriptional repressor PurR from Erwinia tasmaniensis (strain DSM 17950 / CFBP 7177 / CIP 109463 / NCPPB 4357 / Et1/99).